We begin with the raw amino-acid sequence, 330 residues long: Ferredoxin--NADP reductase (330 aa).

Positions 35, 43, 48, 90, 123, 285, and 326 each coordinate FAD.

This sequence belongs to the ferredoxin--NADP reductase type 2 family. Homodimer. Requires FAD as cofactor.

It catalyses the reaction 2 reduced [2Fe-2S]-[ferredoxin] + NADP(+) + H(+) = 2 oxidized [2Fe-2S]-[ferredoxin] + NADPH. This Streptococcus equi subsp. zooepidemicus (strain MGCS10565) protein is Ferredoxin--NADP reductase.